The sequence spans 472 residues: Cannabinoid receptor 1 (472 aa).

Residues 1–116 (MKSILDGLAD…CFMILNPSQQ (116 aa)) lie on the Extracellular side of the membrane. Positions 2-23 (KSILDGLADTTFRTITTDLLYV) are required for mitochondrial localization. 2 N-linked (GlcNAc...) asparagine glycosylation sites follow: asparagine 77 and asparagine 83. Residues 117 to 142 (LAIAVLSLTLGTFTVLENLLVLCVIL) traverse the membrane as a helical segment. At 143–154 (HSRSLRCRPSYH) the chain is on the cytoplasmic side. Residues 155-175 (FIGSLAVADLLGSVIFVYSFV) form a helical membrane-spanning segment. Topologically, residues 176 to 187 (DFHVFHRKDSPN) are extracellular. The chain crosses the membrane as a helical span at residues 188 to 212 (VFLFKLGGVTASFTASVGSLFLTAI). Over 213–232 (DRYISIHRPLAYKKIVTRPK) the chain is Cytoplasmic. The helical transmembrane segment at 233-255 (AVVAFCLMWTIAIVIAVLPLLGW) threads the bilayer. At 256–273 (NCKKLQSVCSDIFPLIDE) the chain is on the extracellular side. Residues 274-299 (TYLMFWIGVTSVLLLFIVYAYMYILW) form a helical membrane-spanning segment. Over 300 to 344 (KAHIHAVRMIQRGTQKSIIIHTSEDGKVQVTRPDQARMDIRLAKT) the chain is Cytoplasmic. A helical membrane pass occupies residues 345–365 (LVLILVVLIICWGPLLAIMVY). At 366–377 (DVFGKMNKLIKT) the chain is on the extracellular side. A helical transmembrane segment spans residues 378–399 (VFAFCSMLCLLNSTVNPIIYAL). The Cytoplasmic portion of the chain corresponds to 400-472 (RSKDLRHAFR…VSTNTSAKAL (73 aa)). Cysteine 415 carries the S-palmitoyl cysteine lipid modification. 2 positions are modified to phosphoserine: serine 425 and serine 429.

It belongs to the G-protein coupled receptor 1 family. Interacts (via C-terminus) with CNRIP1; this interaction attenuates constitutive, but not agonist-dependent, inhibition of voltage-gated Ca(2+) channels in neurons. Associates with G protein alpha subunits, including G(i) alpha-1/GNAI1, G(i) alpha-3/GNAI3 and G(o)-alpha/GNAO1; palmitoylation is important for interaction with GNAI3 and GNAO1. Palmitoylation at Cys-415 is important for recruitment at plasma membrane and lipid rafts and association with G protein alpha subunits. As to expression, expressed in cerebral arterial muscle cells and cerebral cortex (at protein level).

The protein resides in the cell membrane. It is found in the membrane raft. It localises to the mitochondrion outer membrane. Its subcellular location is the cell projection. The protein localises to the axon. The protein resides in the presynapse. Hemopressin, a peptide derived from hemoglobin subunit alpha (HBA1 and/or HBA2), acts as an antagonist peptide: hemopressin-binding efficiently blocks cannabinoid receptor CNR1 and subsequent signaling. Its function is as follows. G-protein coupled receptor for endogenous cannabinoids (eCBs), including N-arachidonoylethanolamide (also called anandamide or AEA) and 2-arachidonoylglycerol (2-AG), as well as phytocannabinoids, such as delta(9)-tetrahydrocannabinol (THC). Mediates many cannabinoid-induced effects, acting, among others, on food intake, memory loss, gastrointestinal motility, catalepsy, ambulatory activity, anxiety, chronic pain. Signaling typically involves reduction in cyclic AMP. In the hypothalamus, may have a dual effect on mitochondrial respiration depending upon the agonist dose and possibly upon the cell type. Increases respiration at low doses, while decreases respiration at high doses. At high doses, CNR1 signal transduction involves G-protein alpha-i protein activation and subsequent inhibition of mitochondrial soluble adenylate cyclase, decrease in cyclic AMP concentration, inhibition of protein kinase A (PKA)-dependent phosphorylation of specific subunits of the mitochondrial electron transport system, including NDUFS2. In the hypothalamus, inhibits leptin-induced reactive oxygen species (ROS) formation and mediates cannabinoid-induced increase in SREBF1 and FASN gene expression. In response to cannabinoids, drives the release of orexigenic beta-endorphin, not that of melanocyte-stimulating hormone alpha/alpha-MSH, from hypothalamic POMC neurons, hence promoting food intake. In the hippocampus, regulates cellular respiration and energy production in response to cannabinoids. Involved in cannabinoid-dependent depolarization-induced suppression of inhibition (DSI), a process in which depolarization of CA1 postsynaptic pyramidal neurons mobilizes eCBs, which retrogradely activate presynaptic CB1 receptors, transiently decreasing GABAergic inhibitory neurotransmission. Also reduces excitatory synaptic transmission. In superior cervical ganglions and cerebral vascular smooth muscle cells, inhibits voltage-gated Ca(2+) channels in a constitutive, as well as agonist-dependent manner. In cerebral vascular smooth muscle cells, inhibition of voltage-gated Ca(2+) channels leads to vasodilation and decrease in vascular tone. Induces leptin production in adipocytes and reduces LRP2-mediated leptin clearance in the kidney, hence participating in hyperleptinemia. In adipose tissue, CNR1 signaling leads to increased expression of SREBF1, ACACA and FASN genes. In the liver, activation by endocannabinoids leads to increased de novo lipogenesis and reduced fatty acid catabolism, associated with increased expression of SREBF1/SREBP-1, GCK, ACACA, ACACB and FASN genes. May also affect de novo cholesterol synthesis and HDL-cholesteryl ether uptake. Peripherally modulates energy metabolism. In high carbohydrate diet-induced obesity, may decrease the expression of mitochondrial dihydrolipoyl dehydrogenase/DLD in striated muscles, as well as that of selected glucose/ pyruvate metabolic enzymes, hence affecting energy expenditure through mitochondrial metabolism. In response to cannabinoid anandamide, elicits a pro-inflammatory response in macrophages, which involves NLRP3 inflammasome activation and IL1B and IL18 secretion. In macrophages infiltrating pancreatic islets, this process may participate in the progression of type-2 diabetes and associated loss of pancreatic beta-cells. In Felis catus (Cat), this protein is Cannabinoid receptor 1 (CNR1).